Reading from the N-terminus, the 264-residue chain is Short-chain dehydrogenase/reductase malC (264 aa).

A helical transmembrane segment spans residues 13–35 (GKNVLIIGGTSGIGFAVAQLVIE). NADP(+) contacts are provided by Thr22, Ser23, Ile25, Ser45, Asn46, Lys49, Asp75, Asn88, Arg130, Val202, and Thr204. Asn249 carries N-linked (GlcNAc...) asparagine glycosylation.

This sequence belongs to the short-chain dehydrogenases/reductases (SDR) family.

It localises to the membrane. It carries out the reaction 1-hydroxy-3-{[2-(1,1-dimethylallyl)-indol-3-yl]methyl}-6H,7H,8H-5lambda(5)-pyrrolo[1,2-a]pyrazine + NADPH + H(+) = 1-hydroxy-3-{[2-(1,1-dimethylallyl)-indol-3-yl]methyl}-4H,6H,7H,8H-pyrrolo[1,2-a]pyrazine + NADP(+). It catalyses the reaction 1-hydroxy-3-{[2-(1,1-dimethylallyl)-indol-3-yl]methyl}-4H,6H,7H,8H-pyrrolo[1,2-a]pyrazine = (+)-premalbrancheamide. It functions in the pathway alkaloid biosynthesis. Functionally, short-chain dehydrogenase/reductase; part of the gene cluster that mediates the biosynthesis of malbrancheamide, a dichlorinated fungal indole alkaloid that belongs to a family of natural products containing a characteristic bicyclo[2.2.2]diazaoctane core. The first step of malbrancheamide biosynthesis involves coupling of L-proline and L-tryptophan by malG, a bimodular NRPS, to produce L-Pro-L-Trp aldehyde through reductive offloading. This compound undergoes spontaneous cyclization and dehydration to give a dienamine which is reverse prenylated at C-2 by malE. The other prenyltransferase present in the cluster, malB, displays modest activity, suggesting that may be a redundant gene in the pathway. Subsequently, a [4+2] Diels-Alder cyclo-addition catalyzed by the bifunctional enzyme malC forms the characteristic bicyclo[2.2.2]diazaoctane ring of premalbrancheamid. The first reaction catalyzed is a NADPH-dependent reduction reaction in which the nicotinamide cofactor is a stoichiometric reagent. Either NADH or NADPH is effective as a cofactor. NADP(+) is required for stereocontrolled formation of premalbrancheamide, however it does not appear to be required as a formal stoichiometric reagent because the second reaction performed by malC, the [4+2] cycloaddition, is a balanced chemical reaction without requirement for hydride transfer to balance the reaction. Finally, the flavin-dependent halogenase malA catalyzes the iterative dichlorination of the indole ring of premalbrancheamide to yield C-9 monochlorinated malbrancheamide B, C-8 monochlorinated isomalbrancheamide B, and dichlorinated malbrancheamide. MalA is also able to brominate premalbrancheamide at C-9 to yield malbrancheamide C, and, to a lesser extend, at C-8 to yield isomalbrancheamide C. Finally, malA can brominate C-9 monochlorinated malbrancheamide B at C-8 to yield malbrancheamide D, or C-8 monochlorinated isomalbrancheamide B at C-9 to produce isomalbrancheamide D. In Malbranchea aurantiaca, this protein is Short-chain dehydrogenase/reductase malC.